Reading from the N-terminus, the 286-residue chain is L-cysteine S-thiosulfotransferase subunit SoxA (286 aa).

The N-terminal stretch at 1–27 (MKKTIQRGLFTGALVLMTAMTAKPANA) is a signal peptide. A disulfide bond links C106 and C137. In terms of domain architecture, Cytochrome c spans 180–286 (DAYMKGKKFF…LKYNGPASRK (107 aa)). The heme site is built by C200 and H204. R243 contributes to the substrate binding site. Heme is bound at residue C247. C247 serves as the catalytic Cysteine persulfide intermediate.

This sequence belongs to the SoxA family. Heterodimer of SoxA and SoxX. The SoxAX complex interacts with CT1020, SoxAX-binding protein SaxB (SoxK); this interaction seems to be between SoxA and CT1020 and stimulates catalytic activity of the SoxAX complex. Heme is required as a cofactor. In terms of processing, cysteine persulfide at Cys-247.

It is found in the periplasm. The enzyme catalyses L-cysteinyl-[SoxY protein] + thiosulfate + 2 Fe(III)-[cytochrome c] = S-sulfosulfanyl-L-cysteinyl-[SoxY protein] + 2 Fe(II)-[cytochrome c] + 2 H(+). The catalysed reaction is S-sulfanyl-L-cysteinyl-[SoxY protein] + thiosulfate + 2 Fe(III)-[cytochrome c] = S-(2-sulfodisulfanyl)-L-cysteinyl-[SoxY protein] + 2 Fe(II)-[cytochrome c] + 2 H(+). In terms of biological role, C-type monoheme cytochrome, which is part of the SoxAX cytochrome complex involved in sulfur oxidation. The SoxAX complex catalyzes the formation of a heterodisulfide bond between the conserved cysteine residue on a sulfur carrier SoxYZ complex subunit SoxY and thiosulfate or other inorganic sulfur substrates. This leads to the liberation of two electrons, which may be transferred from the SoxAX complex to another cytochrome c and which then may be used for reductive CO(2) fixation. This chain is L-cysteine S-thiosulfotransferase subunit SoxA, found in Chlorobaculum tepidum (strain ATCC 49652 / DSM 12025 / NBRC 103806 / TLS) (Chlorobium tepidum).